Reading from the N-terminus, the 584-residue chain is Probable pectinesterase/pectinesterase inhibitor (584 aa).

Positions 1–22 (MAVGKIVISVASMLLVVGVAIG) are cleaved as a signal peptide. The segment at 40 to 191 (NSHQKAVESL…KILSSNAIDI (152 aa)) is pectinesterase inhibitor. N-linked (GlcNAc...) asparagine glycans are attached at residues Asn91 and Asn105. The interval 246 to 267 (AQAGRPGAPADEGIGEGGGGGG) is disordered. The segment at 272 to 571 (THVVAKDGSG…TVANWLTPAN (300 aa)) is pectinesterase. 2 residues coordinate substrate: Thr349 and Gln379. Asp402 (proton donor; for pectinesterase activity) is an active-site residue. Asp423 functions as the Nucleophile; for pectinesterase activity in the catalytic mechanism. Substrate-binding residues include Arg492 and Trp494.

This sequence in the N-terminal section; belongs to the PMEI family. In the C-terminal section; belongs to the pectinesterase family. Pollen, and at much lower levels in pistils and petals.

Its subcellular location is the secreted. It localises to the cell wall. The catalysed reaction is [(1-&gt;4)-alpha-D-galacturonosyl methyl ester](n) + n H2O = [(1-&gt;4)-alpha-D-galacturonosyl](n) + n methanol + n H(+). The protein operates within glycan metabolism; pectin degradation; 2-dehydro-3-deoxy-D-gluconate from pectin: step 1/5. Acts in the modification of cell walls via demethylesterification of cell wall pectin. The sequence is that of Probable pectinesterase/pectinesterase inhibitor (BP19) from Brassica napus (Rape).